Here is a 153-residue protein sequence, read N- to C-terminus: MCNSVRTALAASNCCSIVLCCVLLLTLTLTVAVTAQHNQADETCETLPSEIHLIKEEYDELGRLYRTCNGDVTVNKCEGKCNSQVQPSVITATGFLKECYCCRESFLRERQLQLTHCYDPDGVRMTDHESATMEIRLKEPVDCKCFKCGEMVR.

An N-terminal signal peptide occupies residues 1-35 (MCNSVRTALAASNCCSIVLCCVLLLTLTLTVAVTA). Intrachain disulfides connect Cys44/Cys102, Cys68/Cys117, Cys77/Cys143, Cys81/Cys145, and Cys99/Cys148. Residues 44 to 139 (CETLPSEIHL…SATMEIRLKE (96 aa)) enclose the CTCK domain.

In terms of assembly, heterodimer of burs and pburs.

The protein localises to the secreted. Final heterodimeric neurohormone released at the end of the molting cycle, involved in the sclerotization (tanning) of the insect cuticle, melanization and wing spreading. This Anopheles gambiae (African malaria mosquito) protein is Partner of bursicon.